The primary structure comprises 266 residues: uncharacterized protein (266 aa).

The protein belongs to the chlamydial CPn_0087/CT_309/TC_0583 family.

This is an uncharacterized protein from Chlamydia trachomatis serovar D (strain ATCC VR-885 / DSM 19411 / UW-3/Cx).